We begin with the raw amino-acid sequence, 199 residues long: UPF0056 membrane protein bbp_399 (199 aa).

The next 6 helical transmembrane spans lie at 7-29 (VTILLILIMDPLGNLPIFMSILK), 39-58 (ILIREMMIALLIMLLFLFAG), 71-93 (TVSVSGGIILFLIAIKMIFPTYE), 108-130 (FLVPLAIPLVAGPSLLATLMLLS), 137-156 (ILYLIGSLLIAWMITVVILL), and 176-198 (LMGLILIMLSTQMFLDGIKSWFY).

Belongs to the UPF0056 (MarC) family.

Its subcellular location is the cell membrane. The chain is UPF0056 membrane protein bbp_399 from Buchnera aphidicola subsp. Baizongia pistaciae (strain Bp).